The sequence spans 240 residues: Putative peptidoglycan hydrolase Rv2525c (240 aa).

Positions 1 to 33 (MSVSRRDVLKFAAATPGVLGLGVVASSLRAAPA) form a signal peptide, tat-type signal.

Post-translationally, predicted to be exported by the Tat system. The position of the signal peptide cleavage has not been experimentally proven.

It localises to the secreted. The catalysed reaction is Hydrolysis of (1-&gt;4)-beta-linkages between N-acetylmuramic acid and N-acetyl-D-glucosamine residues in a peptidoglycan and between N-acetyl-D-glucosamine residues in chitodextrins.. The protein operates within cell wall degradation; peptidoglycan degradation. May function as a peptidoglycan hydrolase with glycosidase activity. In vitro, displays esterase activity toward p-nitrophenyl esters of various acyl chain length (C4 to C16), with a preference for p-nitrophenyl butyrate (C4). This Mycobacterium tuberculosis (strain ATCC 25618 / H37Rv) protein is Putative peptidoglycan hydrolase Rv2525c.